The primary structure comprises 386 residues: Galactokinase (386 aa).

35–38 is a binding site for substrate; the sequence is EHTD. Residues Ser69 and 125-131 contribute to the ATP site; that span reads GAGLSSS. Mg(2+) contacts are provided by Ser131 and Glu163. Catalysis depends on Asp175, which acts as the Proton acceptor. Tyr224 provides a ligand contact to substrate.

Belongs to the GHMP kinase family. GalK subfamily.

It is found in the cytoplasm. The enzyme catalyses alpha-D-galactose + ATP = alpha-D-galactose 1-phosphate + ADP + H(+). Its pathway is carbohydrate metabolism; galactose metabolism. In terms of biological role, catalyzes the transfer of the gamma-phosphate of ATP to D-galactose to form alpha-D-galactose-1-phosphate (Gal-1-P). This is Galactokinase from Vibrio vulnificus (strain YJ016).